Here is a 632-residue protein sequence, read N- to C-terminus: ATP-dependent DNA helicase RecQ (632 aa).

Positions 47–215 (IDATLMGKDS…LRHLNLQSPH (169 aa)) constitute a Helicase ATP-binding domain. 60 to 67 (MATGNGKS) lines the ATP pocket. The DEAH box signature appears at 159-162 (DEAH). The region spanning 236-385 (PMEQLCRFVL…IEALKLQAIG (150 aa)) is the Helicase C-terminal domain. Residues cysteine 393, cysteine 410, cysteine 413, and cysteine 416 each contribute to the Zn(2+) site. Positions 544 to 624 (AQYDKDLFAR…QQHKKVLTQH (81 aa)) constitute an HRDC domain.

This sequence belongs to the helicase family. RecQ subfamily. Requires Mg(2+) as cofactor. Zn(2+) is required as a cofactor.

The enzyme catalyses Couples ATP hydrolysis with the unwinding of duplex DNA by translocating in the 3'-5' direction.. The catalysed reaction is ATP + H2O = ADP + phosphate + H(+). In terms of biological role, an ATP-dependent DNA helicase which unwinds DNA in a 3'-5' direction. Plays a role in recombination. The sequence is that of ATP-dependent DNA helicase RecQ from Pasteurella multocida (strain Pm70).